The chain runs to 442 residues: Galactose/N-acetylgalactosamine-binding lectin CEL-III (442 aa).

Positions 1-10 are cleaved as a propeptide — removed in mature form; the sequence is MVSLVPCGFA. Q11 is subject to Pyrrolidone carboxylic acid. The interval 11–304 is has hemagglutinating activity towards rabbit erythrocytes, but no hemolytic activity towards them; the sequence is QVLCTNPLDI…DWEVPTATWN (294 aa). 3 cysteine pairs are disulfide-bonded: C14–C59, C31–C48, and C72–C88. D-galactose contacts are provided by residues D19 and 33-36; that span reads DIVG. Ricin B-type lectin domains are found at residues 28–102 and 115–245; these read SKQC…RWRL and EQVA…WSRP. Residues D33, I34, and G36 each coordinate Ca(2+). Mg(2+) is bound by residues N42 and I43. D49 lines the D-galactose pocket. Residue D53 coordinates Ca(2+). Positions 82 and 83 each coordinate Mg(2+). D-galactose contacts are provided by residues V117 and 131 to 134; that span reads DVEG. C129 and C146 form a disulfide bridge. Residues D131, V132, and G134 each coordinate Ca(2+). I141 serves as a coordination point for Mg(2+). Residue 144 to 147 coordinates D-galactose; it reads YDCQ. Ca(2+) is bound by residues D151, D178, V179, and G181. A disulfide bridge links C176 with C193. 178–181 contributes to the D-galactose binding site; that stretch reads DVEG. N187 and V188 together coordinate Mg(2+). 191-194 provides a ligand contact to D-galactose; the sequence is YSCE. Ca(2+) is bound by residues D198, D219, V220, and G222. The cysteines at positions 217 and 234 are disulfide-linked. D-galactose is bound at residue 219 to 222; sequence DVEG. N228 and V229 together coordinate Mg(2+). 232–235 contributes to the D-galactose binding site; the sequence is YRCD. A Ca(2+)-binding site is contributed by D239. 2 disulfides stabilise this stretch: C249-C254 and C264-C281. The 33-residue stretch at 261–293 folds into the Ricin B-type lectin 3 domain; that stretch reads SNKCLDVSGDQGTGDVGTWQCDGLPDQRFKWVF. The Ca(2+) site is built by D266, V267, and G269. A D-galactose-binding site is contributed by 266 to 269; that stretch reads DVSG. D275 and V276 together coordinate Mg(2+). D-galactose contacts are provided by residues 279 to 282 and D286; that span reads WQCD. D286 contacts Ca(2+). The tract at residues 294–442 is has a strong tendency to self-associate leading to formation of oligomers; the sequence is DDWEVPTATW…NEDCTFCTDI (149 aa). Intrachain disulfides connect C308-C390, C377-C416, C425-C439, and C431-C436.

In terms of assembly, oligomerizes in the human and rabbit erythrocyte membranes. Oligomerization is induced by binding of beta-1,4-linked disaccharide ligands such as lactose, lactulose, N-acetyllactosamine and phenyl-beta-D-galactoside, but only a little by N-acetylgalactosamine and galactose, and not at all by melibiose in aqueous solution in the presence of high salt concentration and pH 10. Forms heptamers that assemble into larger 21mer oligomers, which may be inserted as a transmembrane pore to the erythrocyte membrane. It depends on Ca(2+) as a cofactor. Requires Mg(2+) as cofactor. In terms of tissue distribution, expressed in body fluid (at protein level).

The protein resides in the secreted. Ca(2+) is required for hemolytic activity and the activity increases with increasing calcium concentration. Hemolytic activity is inhibited by N-acetylgalactosamine (GalNAc), lactose, lactulose, galactosamine, dextran with molecular masses greater than 4 kDa, to a lesser extent by inulin and only slightly by sucrose and melezitose, but not by glucose or mannose. The activity is abolished in the presence of 10 mM EDTA. Lactose-binding increases with increasing calcium concentration, but calcium has no effect on hemagglutinating activity. Cytotoxic effect on Madin-Darby canine kidney (MDCK) cell line is strongly inhibited by galactose, lactose and N-acetylgalactosamine (GalNAc), but not by raffinose, N-acetylglucosamine (GlcNAc), glucose, mannose, ribose or sucrose. Pore formation in artificial lactosyl ceramide (LacCer) or globotetraosylceramide (Gb4Cer) containing liposomes is strongly inhibited by lactose. Galactose/N-acetylgalactosamine (Gal/GalNAc)-binding lectin with hemolytic activity. Favors saccharides that have a beta-1,4 linkage at the non-reducing end rather than saccharides having alpha-1,6 or alpha-1,4 linkages. Binds lactose, lactulose, GalNAc, galactosamine, methyl alpha-galactopyranoside, methyl beta-galactopyranoside, N-acetyllactosamine, p-nitrophenyl beta-D-galactopyranoside (pNP-Gal), p-nitrophenyl N-acetyl-beta-D-galactosaminide (pNP-GalNAc), asialofetuin, and human erythrocyte membrane lipids lactosyl ceramide (LacCer) and globoside globotetraosylceramide (Gb4Cer). Binds moderately to galactose, melibiose, raffinose, fucose, methyl alpha-galactoside and methyl beta-galactoside. Binds weakly to glucose, mannose and N-acetylglucosamine (GlcNAc). Has hemolytic activity towards human (A, B and O-type), rabbit and rat erythrocytes, but not towards mouse, chicken or horse erythrocytes. Forms ion-permeable transmembrane pores in the erythrocyte membrane as well as in artificial liposomes containing human erythrocyte membrane lipids LacCer, Gb4Cer and galactosyl ceramide (GalCer) leading to destruction of the membrane. Has hemagglutinating activity towards rabbit, human and rat erythrocytes, and at relatively high concentrations towards chicken and horse erythrocytes, but not towards mouse erythrocytes. Has dose-dependent cytotoxic effect on Madin-Darby canine kidney (MDCK), African green monkey kidney (Vero) and human epithelia carcinoma (HeLa) cell lines, but Chinese hamster ovary (CHO), rat sarcoma (XC) and potoroo rat kangaroo kidney (PtK1) cells are highly resistant to the cytotoxic effect of this protein. Impairs malaria parasite development in malaria parasite infected transgenic A.stephensi mosquitoes expressing this protein specifically in their midguts. Binds to ookinetes and leads to strong dose-dependent inhibition of ookinete formation in vitro. Leads to severely impaired oocyst formation and significantly reduced sporozoite production of rodent malaria parasite P.berghei in the salivary glands of the transgenic mosquitoes. The parasite transmission to uninfected mice (vectorial competence) of these mosquitoes is significantly impaired. Also leads to severely impaired oocyst formation of human malaria parasite P.falciparum in transgenic mosquitoes fed on mature P.falciparum gametocyte cultures. May be involved in defense mechanisms acting as a toxic protein to foreign microorganisms. May act in defense against predators. The chain is Galactose/N-acetylgalactosamine-binding lectin CEL-III from Pseudocnus echinatus (Sea cucumber).